Here is a 240-residue protein sequence, read N- to C-terminus: Enoyl-CoA delta isomerase 2, peroxisomal (240 aa).

A Microbody targeting signal motif is present at residues 238–240 (PKL).

It belongs to the enoyl-CoA hydratase/isomerase family.

It is found in the peroxisome. It carries out the reaction a (3Z)-enoyl-CoA = a 4-saturated (2E)-enoyl-CoA. The enzyme catalyses a (3E)-enoyl-CoA = a 4-saturated (2E)-enoyl-CoA. It functions in the pathway lipid metabolism; fatty acid beta-oxidation. Able to isomerize both 3-cis and 3-trans double bonds into the 2-trans form in a range of enoyl-CoA species. Essential for the beta oxidation of unsaturated fatty acids. Involved with IBR1 and IBR3 in the peroxisomal beta-oxidation of indole-3-butyric acid (IBA) to form indole-3-acetic acid (IAA), a biologically active auxin. The polypeptide is Enoyl-CoA delta isomerase 2, peroxisomal (Arabidopsis thaliana (Mouse-ear cress)).